The following is a 378-amino-acid chain: MPHSSLHPSIPRPRGHRAKKAAFVLLSTCLAALWELGEPADHILRWLVLHLASEQLGLLFKGLCSLAEEIRHVHSRYQGSYWRAFRACLGCPIRCGVLLLLSCYCYTFLPNTAGLPFAWIVALLGLSQALNILLDLQGLAPAVVSTVCEQGNFNVAHGLAWSYYIGYLRLILPGLQARIHTYNQRHNNTVRGTGVHKLYILLPLDCGVPDDLSVADPNIRFLHELPKQSADRAGIKGRVYTNSIYEILENGKPVGTCVLEYATPLQTLFAMSQDSRAGFSREERLEQAKLFCQTLGDILADVPESQYCRLIVYLDAAEGSSFSLSQEILKHLKQEEKEEVTVGTMGSSGVLESSTLDKEPQLLISGMDQPLPLRTDVF.

The next 2 helical transmembrane spans lie at 21 to 41 (AAFV…EPAD) and 46 to 66 (WLVL…LCSL). S-palmitoyl cysteine attachment occurs at residues cysteine 88 and cysteine 91. 2 consecutive transmembrane segments (helical) span residues 89 to 109 (LGCP…YTFL) and 114 to 134 (GLPF…NILL). Positions 153–339 (FNVAHGLAWS…KHLKQEEKEE (187 aa)) are cyclic dinucleotide-binding domain (CBD). The 2',3'-cGAMP site is built by serine 162, tyrosine 167, arginine 238, and threonine 263. 3',3'-c-di-GMP-binding positions include serine 162, tyrosine 167, 238–241 (RVYT), and threonine 263. The 2',3'-cUAMP site is built by tyrosine 167, arginine 238, and threonine 263. A C-terminal tail (CTT) region spans residues 339 to 378 (EVTVGTMGSSGVLESSTLDKEPQLLISGMDQPLPLRTDVF). Serine 354 carries the phosphoserine modification. The residue at position 355 (threonine 355) is a Phosphothreonine. The pLxIS motif motif lies at 362–365 (LLIS). The residue at position 365 (serine 365) is a Phosphoserine; by TBK1.

This sequence belongs to the STING family. Homodimer; forms a homodimer in absence of cyclic nucleotide (c-di-GMP or cGAMP). Homotetramer; in presence of cyclic nucleotide (c-di-GMP or cGAMP), forms tetramers and higher-order oligomers through side-by-side packing. Interacts (when phosphorylated) with IRF3; following activation and phosphorylation on the pLxIS motif by TBK1, recruits IRF3. Interacts with TBK1; when homodimer, leading to subsequent production of IFN-beta. Post-translationally, phosphorylation by TBK1 leads to activation and production of IFN-beta. Following cyclic nucleotide (c-di-GMP or cGAMP)-binding, activation and translocation from the endoplasmic reticulum, STING1 is phosphorylated by TBK1 at Ser-365 in the pLxIS motif. The phosphorylated pLxIS motif constitutes an IRF3-binding motif, leading to recruitment of the transcription factor IRF3 to induce type-I interferons and other cytokines. In contrast, lacks phosphorylation site at position 357, leading to reduced production of type-I interferons and other cytokines.

The protein resides in the endoplasmic reticulum membrane. It localises to the cytoplasm. The protein localises to the perinuclear region. Its subcellular location is the endoplasmic reticulum-Golgi intermediate compartment membrane. It is found in the golgi apparatus membrane. The protein resides in the cytoplasmic vesicle. It localises to the autophagosome membrane. The protein localises to the mitochondrion outer membrane. Its subcellular location is the cell membrane. The catalysed reaction is H(+)(in) = H(+)(out). Its function is as follows. Facilitator of innate immune signaling that acts as a sensor of cytosolic DNA from bacteria and viruses and promotes low production of type I interferon (IFN-alpha and IFN-beta). Compared to other mammals, STING1-dependent type I interferon induction is strongly reduced in bats, suggesting that the cGAS-STING pathway promotes a limited inflammatory response. Innate immune response is triggered in response to non-CpG double-stranded DNA from viruses and bacteria delivered to the cytoplasm. Acts by binding cyclic dinucleotides: recognizes and binds cyclic di-GMP (c-di-GMP), a second messenger produced by bacteria, cyclic UMP-AMP (2',3'-cUAMP), and cyclic GMP-AMP (cGAMP), a messenger produced by CGAS in response to DNA virus in the cytosol. Upon binding to c-di-GMP, cUAMP or cGAMP, STING1 oligomerizes, translocates from the endoplasmic reticulum and is phosphorylated by TBK1 on the pLxIS motif, leading to recruitment and subsequent activation of the transcription factor IRF3 to induce expression of type I interferon and exert a potent anti-viral state. In addition to promote the production of type I interferons, plays a direct role in autophagy. Following cGAMP-binding, STING1 buds from the endoplasmic reticulum into COPII vesicles, which then form the endoplasmic reticulum-Golgi intermediate compartment (ERGIC). The ERGIC serves as the membrane source for WIPI2 recruitment and LC3 lipidation, leading to formation of autophagosomes that target cytosolic DNA or DNA viruses for degradation by the lysosome. Promotes autophagy by acting as a proton channel that directs proton efflux from the Golgi to facilitate MAP1LC3B/LC3B lipidation. The autophagy- and interferon-inducing activities can be uncoupled and autophagy induction is independent of TBK1 phosphorylation. This Rhinolophus ferrumequinum (Greater horseshoe bat) protein is Stimulator of interferon genes protein.